The chain runs to 587 residues: Pyruvate decarboxylase 3 (587 aa).

The substrate site is built by D48 and H135. A thiamine pyrophosphate binding region spans residues 415–496; that stretch reads DSWFNCQKLR…FLINNGGYTI (82 aa). Residues D464, N491, and G493 each coordinate Mg(2+). E497 contributes to the substrate binding site.

This sequence belongs to the TPP enzyme family. As to quaternary structure, homotetramer. A metal cation serves as cofactor. Requires thiamine diphosphate as cofactor.

The catalysed reaction is a 2-oxocarboxylate + H(+) = an aldehyde + CO2. The sequence is that of Pyruvate decarboxylase 3 (PDC3) from Oryza sativa subsp. japonica (Rice).